A 160-amino-acid polypeptide reads, in one-letter code: Thy-1 membrane glycoprotein (160 aa).

The signal sequence occupies residues 1 to 19; the sequence is MNPTVSIAVILTVLQAAHC. Q20 carries the post-translational modification Pyrrolidone carboxylic acid. The Ig-like V-type domain maps to 20-120; that stretch reads QMIRDLSACL…YTGNQIKNIT (101 aa). 2 cysteine pairs are disulfide-bonded: C28-C129 and C38-C103. 3 N-linked (GlcNAc...) asparagine glycosylation sites follow: N42, N78, and N118. A lipid anchor (GPI-anchor amidated cysteine) is attached at C129. Positions 130–160 are cleaved as a propeptide — removed in mature form; sequence VRLSLLIQNTSWLLLLLLSLPLLQAVDFVSL. N138 is a glycosylation site (N-linked (GlcNAc...) asparagine).

The N-terminus is blocked. Forebrain, cerebellum and tectum.

The protein resides in the cell membrane. May play a role in cell-cell or cell-ligand interactions during synaptogenesis and other events in the brain. The polypeptide is Thy-1 membrane glycoprotein (THY1) (Gallus gallus (Chicken)).